The chain runs to 1203 residues: DNA-directed RNA polymerase subunit beta (1203 aa).

Residues 1167-1203 (LSKYAQQQEEQRKAAAQTDESKTAPATKNESQPNTQD) form a disordered region. Residues 1190-1203 (APATKNESQPNTQD) are compositionally biased toward polar residues.

The protein belongs to the RNA polymerase beta chain family. As to quaternary structure, the RNAP catalytic core consists of 2 alpha, 1 beta, 1 beta' and 1 omega subunit. When a sigma factor is associated with the core the holoenzyme is formed, which can initiate transcription.

The enzyme catalyses RNA(n) + a ribonucleoside 5'-triphosphate = RNA(n+1) + diphosphate. Its function is as follows. DNA-dependent RNA polymerase catalyzes the transcription of DNA into RNA using the four ribonucleoside triphosphates as substrates. The sequence is that of DNA-directed RNA polymerase subunit beta from Levilactobacillus brevis (strain ATCC 367 / BCRC 12310 / CIP 105137 / JCM 1170 / LMG 11437 / NCIMB 947 / NCTC 947) (Lactobacillus brevis).